The chain runs to 319 residues: Beta-ketoacyl-[acyl-carrier-protein] synthase III (319 aa).

Residues C110 and H246 contribute to the active site. Residues 247–251 (QANYR) form an ACP-binding region. N276 is an active-site residue.

This sequence belongs to the thiolase-like superfamily. FabH family. In terms of assembly, homodimer.

It is found in the cytoplasm. It catalyses the reaction malonyl-[ACP] + acetyl-CoA + H(+) = 3-oxobutanoyl-[ACP] + CO2 + CoA. Its pathway is lipid metabolism; fatty acid biosynthesis. Its function is as follows. Catalyzes the condensation reaction of fatty acid synthesis by the addition to an acyl acceptor of two carbons from malonyl-ACP. Catalyzes the first condensation reaction which initiates fatty acid synthesis and may therefore play a role in governing the total rate of fatty acid production. Possesses both acetoacetyl-ACP synthase and acetyl transacylase activities. Its substrate specificity determines the biosynthesis of branched-chain and/or straight-chain of fatty acids. This chain is Beta-ketoacyl-[acyl-carrier-protein] synthase III, found in Lactobacillus delbrueckii subsp. bulgaricus (strain ATCC 11842 / DSM 20081 / BCRC 10696 / JCM 1002 / NBRC 13953 / NCIMB 11778 / NCTC 12712 / WDCM 00102 / Lb 14).